The primary structure comprises 338 residues: Ketol-acid reductoisomerase (NADP(+)) (338 aa).

In terms of domain architecture, KARI N-terminal Rossmann spans 1-181; sequence MKVFYDKDAD…GGGRAGIIET (181 aa). Residues 24 to 27, arginine 47, and serine 52 contribute to the NADP(+) site; that span reads YGSQ. Histidine 107 is a catalytic residue. Residue glycine 133 participates in NADP(+) binding. The 146-residue stretch at 182–327 folds into the KARI C-terminal knotted domain; it reads NFREETETDL…GKLRAMMPWI (146 aa). The Mg(2+) site is built by aspartate 190, glutamate 194, glutamate 226, and glutamate 230. Serine 251 is a substrate binding site.

The protein belongs to the ketol-acid reductoisomerase family. Mg(2+) is required as a cofactor.

It catalyses the reaction (2R)-2,3-dihydroxy-3-methylbutanoate + NADP(+) = (2S)-2-acetolactate + NADPH + H(+). The enzyme catalyses (2R,3R)-2,3-dihydroxy-3-methylpentanoate + NADP(+) = (S)-2-ethyl-2-hydroxy-3-oxobutanoate + NADPH + H(+). It functions in the pathway amino-acid biosynthesis; L-isoleucine biosynthesis; L-isoleucine from 2-oxobutanoate: step 2/4. It participates in amino-acid biosynthesis; L-valine biosynthesis; L-valine from pyruvate: step 2/4. In terms of biological role, involved in the biosynthesis of branched-chain amino acids (BCAA). Catalyzes an alkyl-migration followed by a ketol-acid reduction of (S)-2-acetolactate (S2AL) to yield (R)-2,3-dihydroxy-isovalerate. In the isomerase reaction, S2AL is rearranged via a Mg-dependent methyl migration to produce 3-hydroxy-3-methyl-2-ketobutyrate (HMKB). In the reductase reaction, this 2-ketoacid undergoes a metal-dependent reduction by NADPH to yield (R)-2,3-dihydroxy-isovalerate. In Cupriavidus metallidurans (strain ATCC 43123 / DSM 2839 / NBRC 102507 / CH34) (Ralstonia metallidurans), this protein is Ketol-acid reductoisomerase (NADP(+)).